The primary structure comprises 318 residues: Transcription factor zip-4 (318 aa).

Positions 1-13 (MYNYNYSRGNKSM) are enriched in polar residues. 4 disordered regions span residues 1–20 (MYNY…PRFH), 147–205 (EKKP…TAAA), 238–257 (NNDA…LQKD), and 273–318 (ELQS…KSNY). A compositionally biased stretch (acidic residues) spans 173-190 (DYQEEGETSLSDNDESVD). The region spanning 228–291 (EPIYKLKRAR…ERDQQLIKQL (64 aa)) is the bZIP domain. The tract at residues 232–266 (KLKRARNNDAVRKSRNKAKELQLQKDEEYDEMKKR) is basic motif. Residues 242–280 (VRKSRNKAKELQLQKDEEYDEMKKRITQLEAELQSEREG) are a coiled coil. The interval 267–274 (ITQLEAEL) is leucine-zipper. Residues 275 to 298 (QSEREGRERDQQLIKQLIREKEST) are compositionally biased toward basic and acidic residues. The segment covering 307-318 (RNALESFNKSNY) has biased composition (polar residues).

It belongs to the bZIP family. C/EBP subfamily.

It localises to the nucleus. Its function is as follows. Transcription factor that binds to the promoter and the enhancer regions of target genes. Involved in responding to mitochondrial damage. Has a protective role in response to infection by the Gram-negative bacterium P.aeruginosa. This is Transcription factor zip-4 from Caenorhabditis elegans.